The chain runs to 701 residues: Glycine--tRNA ligase beta subunit (701 aa).

The protein belongs to the class-II aminoacyl-tRNA synthetase family. In terms of assembly, tetramer of two alpha and two beta subunits.

The protein resides in the cytoplasm. The catalysed reaction is tRNA(Gly) + glycine + ATP = glycyl-tRNA(Gly) + AMP + diphosphate. The protein is Glycine--tRNA ligase beta subunit of Thiobacillus denitrificans (strain ATCC 25259 / T1).